The sequence spans 493 residues: Desmethylyatein synthase (493 aa).

The helical transmembrane segment at 1–21 (METFQCLTLFLLFISTVFILK) threads the bilayer. A heme-binding site is contributed by C434.

Belongs to the cytochrome P450 family. Heme is required as a cofactor.

The protein localises to the membrane. It carries out the reaction (-)-bursehernin + reduced [NADPH--hemoprotein reductase] + O2 = (-)-5'-demethylyatein + oxidized [NADPH--hemoprotein reductase] + H2O + H(+). It participates in aromatic compound metabolism; phenylpropanoid biosynthesis. In terms of biological role, cytochrome P450 involved in the biosynthesis of etoposide, a chemotherapeutic compound of the topoisomerase inhibitor family. Catalyzes the conversion of bursehernin to demethylyatein. This chain is Desmethylyatein synthase, found in Sinopodophyllum hexandrum (Himalayan may apple).